Here is a 152-residue protein sequence, read N- to C-terminus: Transcriptional regulator MraZ (152 aa).

SpoVT-AbrB domains lie at 5-52 (ASAV…PLNQ) and 81-124 (ATEC…SESE).

This sequence belongs to the MraZ family. Forms oligomers.

Its subcellular location is the cytoplasm. It localises to the nucleoid. This chain is Transcriptional regulator MraZ, found in Histophilus somni (strain 2336) (Haemophilus somnus).